A 292-amino-acid chain; its full sequence is Phosphatidylglycerol--prolipoprotein diacylglyceryl transferase (292 aa).

Transmembrane regions (helical) follow at residues 25–45, 70–90, 101–121, 138–158, 193–213, and 255–275; these read IALH…WWYA, FVVW…VLVW, AIIA…GIII, FDIV…CNFI, FMEG…FKAL, and GFTY…YLLL. An a 1,2-diacyl-sn-glycero-3-phospho-(1'-sn-glycerol)-binding site is contributed by arginine 153.

The protein belongs to the Lgt family.

It is found in the cell inner membrane. The catalysed reaction is L-cysteinyl-[prolipoprotein] + a 1,2-diacyl-sn-glycero-3-phospho-(1'-sn-glycerol) = an S-1,2-diacyl-sn-glyceryl-L-cysteinyl-[prolipoprotein] + sn-glycerol 1-phosphate + H(+). The protein operates within protein modification; lipoprotein biosynthesis (diacylglyceryl transfer). Catalyzes the transfer of the diacylglyceryl group from phosphatidylglycerol to the sulfhydryl group of the N-terminal cysteine of a prolipoprotein, the first step in the formation of mature lipoproteins. This is Phosphatidylglycerol--prolipoprotein diacylglyceryl transferase from Bartonella quintana (strain Toulouse) (Rochalimaea quintana).